We begin with the raw amino-acid sequence, 103 residues long: Truncated secreted TNF-receptor-like protein A53R (103 aa).

The TNFR-Cys 1 repeat unit spans residues 36–73; the sequence is SCDKGEYLDKRHNQCCNRCPPGEFAKVRCNGNDNTKCE. 3 disulfides stabilise this stretch: Cys37/Cys50, Cys51/Cys64, and Cys54/Cys72. A TNFR-Cys 2; truncated repeat occupies 74-103; sequence RCPPHTYTTIPIILMDVINVENAQPDHLIR.

This sequence belongs to the poxviridae A53R protein family.

The polypeptide is Truncated secreted TNF-receptor-like protein A53R (Vaccinia virus (strain Western Reserve) (VACV)).